The chain runs to 563 residues: Serine carboxypeptidase S10 family member 2 (563 aa).

The first 23 residues, 1–23 (MNIKIILLSIILIIQLLLLNNNG), serve as a signal peptide directing secretion. Over 24 to 529 (GIVESKINFS…VPLTLGAWIG (506 aa)) the chain is Extracellular. Asn31, Asn95, Asn110, and Asn213 each carry an N-linked (GlcNAc...) asparagine glycan. Ser225 is an active-site residue. 3 N-linked (GlcNAc...) asparagine glycosylation sites follow: Asn244, Asn328, and Asn382. The active site involves Asp417. The N-linked (GlcNAc...) asparagine glycan is linked to Asn468. The active site involves His479. Asn499 carries N-linked (GlcNAc...) asparagine glycosylation. A helical transmembrane segment spans residues 530–550 (ITVGGCAFGFLVGGLIIYIIM). At 551 to 563 (KKSSKNGYYKVIQ) the chain is on the cytoplasmic side.

It belongs to the peptidase S10 family.

It localises to the membrane. Its function is as follows. Probable carboxypeptidase. The protein is Serine carboxypeptidase S10 family member 2 of Dictyostelium discoideum (Social amoeba).